The chain runs to 554 residues: Glucose-6-phosphate isomerase (554 aa).

Catalysis depends on glutamate 359, which acts as the Proton donor. Active-site residues include histidine 390 and lysine 518.

It belongs to the GPI family.

The protein resides in the cytoplasm. The enzyme catalyses alpha-D-glucose 6-phosphate = beta-D-fructose 6-phosphate. It participates in carbohydrate biosynthesis; gluconeogenesis. It functions in the pathway carbohydrate degradation; glycolysis; D-glyceraldehyde 3-phosphate and glycerone phosphate from D-glucose: step 2/4. Catalyzes the reversible isomerization of glucose-6-phosphate to fructose-6-phosphate. This is Glucose-6-phosphate isomerase from Pseudomonas aeruginosa (strain LESB58).